A 455-amino-acid polypeptide reads, in one-letter code: Anaerobic glycerol-3-phosphate dehydrogenase subunit B (455 aa).

This sequence belongs to the anaerobic G-3-P dehydrogenase subunit B family. Composed of a catalytic GlpA/B dimer and of membrane bound GlpC. It depends on FMN as a cofactor.

The enzyme catalyses a quinone + sn-glycerol 3-phosphate = dihydroxyacetone phosphate + a quinol. The protein operates within polyol metabolism; glycerol degradation via glycerol kinase pathway; glycerone phosphate from sn-glycerol 3-phosphate (anaerobic route): step 1/1. Conversion of glycerol 3-phosphate to dihydroxyacetone. Uses fumarate or nitrate as electron acceptor. This is Anaerobic glycerol-3-phosphate dehydrogenase subunit B from Aliivibrio fischeri (strain MJ11) (Vibrio fischeri).